The following is a 250-amino-acid chain: 2-C-methyl-D-erythritol 4-phosphate cytidylyltransferase (250 aa).

This sequence belongs to the IspD/TarI cytidylyltransferase family. IspD subfamily.

The catalysed reaction is 2-C-methyl-D-erythritol 4-phosphate + CTP + H(+) = 4-CDP-2-C-methyl-D-erythritol + diphosphate. It functions in the pathway isoprenoid biosynthesis; isopentenyl diphosphate biosynthesis via DXP pathway; isopentenyl diphosphate from 1-deoxy-D-xylulose 5-phosphate: step 2/6. Functionally, catalyzes the formation of 4-diphosphocytidyl-2-C-methyl-D-erythritol from CTP and 2-C-methyl-D-erythritol 4-phosphate (MEP). The chain is 2-C-methyl-D-erythritol 4-phosphate cytidylyltransferase from Streptomyces avermitilis (strain ATCC 31267 / DSM 46492 / JCM 5070 / NBRC 14893 / NCIMB 12804 / NRRL 8165 / MA-4680).